The sequence spans 629 residues: Transferrin (629 aa).

The signal sequence occupies residues methionine 1 to alanine 21. 2 consecutive Transferrin-like domains span residues tyrosine 26 to glycine 366 and methionine 372 to cysteine 621. 2 disulfides stabilise this stretch: cysteine 29–cysteine 63 and cysteine 38–cysteine 54. Tyrosine 111 is a binding site for Fe(3+). 6 cysteine pairs are disulfide-bonded: cysteine 135-cysteine 231, cysteine 184-cysteine 210, cysteine 207-cysteine 216, cysteine 270-cysteine 283, cysteine 375-cysteine 409, and cysteine 385-cysteine 403. Hydrogencarbonate contacts are provided by threonine 137, arginine 141, valine 143, and glycine 144. Tyrosine 225 lines the Fe(3+) pocket. Fe(3+) is bound by residues aspartate 408 and histidine 561.

It belongs to the transferrin family. As to quaternary structure, monomer.

Functionally, transferrins are iron binding transport proteins which bind Fe(3+) ion in association with the binding of an anion, usually bicarbonate. This transferrin binds only one Fe(3+) ion per protein molecule. Transports iron ions from the hemolymph into the eggs during the vitellogenic stage (oogenesis). The polypeptide is Transferrin (Sarcophaga peregrina (Flesh fly)).